A 369-amino-acid polypeptide reads, in one-letter code: Delta(6)-protoilludene synthase STEHIDRAFT_73029 (369 aa).

Mg(2+)-binding residues include Asp-107, Asn-243, Ser-247, and Glu-251. The D(D/E)XX(D/E) motif motif lies at 107 to 111 (DEYSD). An NSE motif motif is present at residues 243–251 (NDIVSYNLE). Residues Arg-333 and Tyr-334 each contribute to the (2E,6E)-farnesyl diphosphate site.

Belongs to the terpene synthase family. It depends on Mg(2+) as a cofactor. Requires Mn(2+) as cofactor. The cofactor is Ca(2+). Ni(2+) serves as cofactor. Co(2+) is required as a cofactor.

It catalyses the reaction (2E,6E)-farnesyl diphosphate = Delta(6)-protoilludene + diphosphate. It carries out the reaction (2E,6E)-farnesyl diphosphate = alpha-selinene + diphosphate. Ca(2+) switches the cyclization mechanism of delta(6)-protoilludene synthase from 1,11 to 1,10 cyclization which leads to the production of beta-elemene. Its function is as follows. Terpene cyclase that catalyzes the cyclization of farnesyl diphosphate (FPP) to delta(6)-protoilludene. In presence of Ca(2+), a significant switch from 1,11 to a dual 1,11/1,10 cyclization occurs, producing beta-elemene as the major product, with lower levels of delta(6)-protoilludene and (E)-beta-caryophyllene, and traces of beta-selinene and alpha-selinene. The protein is Delta(6)-protoilludene synthase STEHIDRAFT_73029 of Stereum hirsutum (strain FP-91666) (White-rot fungus).